Here is a 423-residue protein sequence, read N- to C-terminus: Diaminobutyrate--2-oxoglutarate transaminase (423 aa).

Position 271 is an N6-(pyridoxal phosphate)lysine (Lys271).

It belongs to the class-III pyridoxal-phosphate-dependent aminotransferase family. Requires pyridoxal 5'-phosphate as cofactor.

It carries out the reaction L-2,4-diaminobutanoate + 2-oxoglutarate = L-aspartate 4-semialdehyde + L-glutamate. Its pathway is amine and polyamine biosynthesis; ectoine biosynthesis; L-ectoine from L-aspartate 4-semialdehyde: step 1/3. In terms of biological role, catalyzes reversively the conversion of L-aspartate beta-semialdehyde (ASA) to L-2,4-diaminobutyrate (DABA) by transamination with L-glutamate. The polypeptide is Diaminobutyrate--2-oxoglutarate transaminase (ectB) (Streptomyces avermitilis (strain ATCC 31267 / DSM 46492 / JCM 5070 / NBRC 14893 / NCIMB 12804 / NRRL 8165 / MA-4680)).